The primary structure comprises 464 residues: E3 ubiquitin-protein ligase MYLIP-B (464 aa).

Residues 1-279 form the FERM domain; it reads MLCHITRPDS…EIHAFYRCDT (279 aa). Residues 381–416 form an RING-type zinc finger; the sequence is CALCCEQEISAAFCPCGHMFCCYNCASQLQCCPVCR.

Interacts with anxa5.

Its subcellular location is the cytoplasm. The protein localises to the cytosol. The catalysed reaction is S-ubiquitinyl-[E2 ubiquitin-conjugating enzyme]-L-cysteine + [acceptor protein]-L-lysine = [E2 ubiquitin-conjugating enzyme]-L-cysteine + N(6)-ubiquitinyl-[acceptor protein]-L-lysine.. The protein operates within protein modification; protein ubiquitination. Its function is as follows. E3 ubiquitin-protein ligase that mediates ubiquitination and subsequent proteasomal degradation of myosin regulatory light chain (MRLC). Regulates cell movements during gastrulation by acting downstream of fz7 to antagonize the frizzled-signaling pathway. The protein is E3 ubiquitin-protein ligase MYLIP-B of Danio rerio (Zebrafish).